Reading from the N-terminus, the 257-residue chain is Thiazole synthase (257 aa).

K96 (schiff-base intermediate with DXP) is an active-site residue. 1-deoxy-D-xylulose 5-phosphate-binding positions include G157, 184–185 (AG), and 206–207 (NT).

Belongs to the ThiG family. As to quaternary structure, homotetramer. Forms heterodimers with either ThiH or ThiS.

The protein resides in the cytoplasm. The enzyme catalyses [ThiS sulfur-carrier protein]-C-terminal-Gly-aminoethanethioate + 2-iminoacetate + 1-deoxy-D-xylulose 5-phosphate = [ThiS sulfur-carrier protein]-C-terminal Gly-Gly + 2-[(2R,5Z)-2-carboxy-4-methylthiazol-5(2H)-ylidene]ethyl phosphate + 2 H2O + H(+). It participates in cofactor biosynthesis; thiamine diphosphate biosynthesis. Its function is as follows. Catalyzes the rearrangement of 1-deoxy-D-xylulose 5-phosphate (DXP) to produce the thiazole phosphate moiety of thiamine. Sulfur is provided by the thiocarboxylate moiety of the carrier protein ThiS. In vitro, sulfur can be provided by H(2)S. This chain is Thiazole synthase, found in Rhizobium meliloti (strain 1021) (Ensifer meliloti).